The following is a 387-amino-acid chain: MDGRNEKPTTPVSDFRVGSSEQSQAGVNLEDSSDHRTSNSAESKKGNLSGKSISDLGISNNDNKNVRFTADTDALENDLSSRSTETSDNSKGTDGQDEEDRPARHKRKPKVSFTHLRNNGKDGDDETFIKKIINNLTGNQGGLVPGLAPIPSENENGKNDIEKNNRNEEIPLSDLADASKIVDVHEGDDKEKLEALKLEGDVNCTSDGETLGSSSKNSFLAPAVDHFDDYAENNSSDDNEGFIETSTYVPPPSQVKSGVLGSLLKLYQNEDQNSSSIFSDSQAVTTDDEGISSTAGNKDVPVAKRSRLQNLKGKAKKGRMPRLKKRLKTEAKITVHIADILQRHRFILRMCRALMMYGAPTHRLEEYMVMTSRVLEIDGQFCIFQVV.

Disordered stretches follow at residues 1-126 (MDGR…GDDE), 138-169 (GNQG…RNEE), and 275-298 (SSIF…AGNK). Basic and acidic residues predominate over residues 32 to 45 (SSDHRTSNSAESKK). Polar residues-rich tracts occupy residues 49 to 63 (SGKS…NNDN) and 78 to 93 (DLSS…SKGT). The span at 155-169 (ENGKNDIEKNNRNEE) shows a compositional bias: basic and acidic residues. Residues 275-296 (SSIFSDSQAVTTDDEGISSTAG) are compositionally biased toward polar residues.

This sequence belongs to the ThrE exporter (TC 2.A.79) family.

This is an uncharacterized protein from Saccharomyces cerevisiae (strain ATCC 204508 / S288c) (Baker's yeast).